The sequence spans 237 residues: Neural retina-specific leucine zipper protein (237 aa).

Glycyl lysine isopeptide (Lys-Gly) (interchain with G-Cter in SUMO) cross-links involve residues Lys-20 and Lys-24. The interval Val-23 to Gly-57 is disordered. The tract at residues Gly-30 to Glu-93 is minimal transactivation domain (MTD). Residues Arg-159–Arg-185 form a basic motif region. The 64-residue stretch at Arg-159–Leu-222 folds into the bZIP domain. Residues Leu-187–Leu-208 form a leucine-zipper region.

Belongs to the bZIP family. Interacts with FIZ1; this interaction represses transactivation. Interacts (via the leucine-zipper domain) with CRX. Post-translationally, phosphorylated. In terms of processing, disumoylated at Lys-20. Sumoylation modulates the transcriptional activity of NRL on RHO and NR2E3 promoters, and is required for normal rod differentiation. Expressed in the brain and the retina. Expressed strongly in rod and cone cells (at protein level).

The protein resides in the cytoplasm. It is found in the nucleus. In terms of biological role, acts as a transcriptional activator which regulates the expression of several rod-specific genes, including RHO and PDE6B. Also functions as a transcriptional coactivator, stimulating transcription mediated by the transcription factor CRX and NR2E3. Binds to the rhodopsin promoter in a sequence-specific manner. The chain is Neural retina-specific leucine zipper protein (NRL) from Homo sapiens (Human).